The chain runs to 75 residues: Translational regulator CsrA (75 aa).

The protein belongs to the CsrA/RsmA family. In terms of assembly, homodimer; the beta-strands of each monomer intercalate to form a hydrophobic core, while the alpha-helices form wings that extend away from the core.

It localises to the cytoplasm. Its function is as follows. A translational regulator that binds mRNA to regulate translation initiation and/or mRNA stability. Usually binds in the 5'-UTR at or near the Shine-Dalgarno sequence preventing ribosome-binding, thus repressing translation. Its main target seems to be the major flagellin gene, while its function is anatagonized by FliW. The sequence is that of Translational regulator CsrA from Treponema denticola (strain ATCC 35405 / DSM 14222 / CIP 103919 / JCM 8153 / KCTC 15104).